A 207-amino-acid chain; its full sequence is Large ribosomal subunit protein uL4 (207 aa).

Positions 50-76 (KTKTVSEVSGTTKKPFKQKGTGNARQG) are disordered.

It belongs to the universal ribosomal protein uL4 family. As to quaternary structure, part of the 50S ribosomal subunit.

One of the primary rRNA binding proteins, this protein initially binds near the 5'-end of the 23S rRNA. It is important during the early stages of 50S assembly. It makes multiple contacts with different domains of the 23S rRNA in the assembled 50S subunit and ribosome. In terms of biological role, forms part of the polypeptide exit tunnel. This Rickettsia typhi (strain ATCC VR-144 / Wilmington) protein is Large ribosomal subunit protein uL4.